The primary structure comprises 114 residues: UPF0342 protein NT01CX_2274 (114 aa).

Belongs to the UPF0342 family.

In Clostridium novyi (strain NT), this protein is UPF0342 protein NT01CX_2274.